We begin with the raw amino-acid sequence, 83 residues long: Small ribosomal subunit protein uS17 (83 aa).

It belongs to the universal ribosomal protein uS17 family. Part of the 30S ribosomal subunit.

One of the primary rRNA binding proteins, it binds specifically to the 5'-end of 16S ribosomal RNA. The polypeptide is Small ribosomal subunit protein uS17 (Zymomonas mobilis subsp. mobilis (strain ATCC 31821 / ZM4 / CP4)).